The chain runs to 693 residues: Phosphoribosylformylglycinamidine synthase subunit PurL (693 aa).

His34 is an active-site residue. The ATP site is built by Tyr37 and Lys76. Glu78 contributes to the Mg(2+) binding site. Substrate contacts are provided by residues 79–82 (SHNH) and Arg101. The Proton acceptor role is filled by His80. Asp102 provides a ligand contact to Mg(2+). A substrate-binding site is contributed by Gln222. Asp248 is a binding site for Mg(2+). A substrate-binding site is contributed by 292–294 (ETQ). The ATP site is built by Asp470 and Gly507. Residue Ser510 participates in substrate binding.

The protein belongs to the FGAMS family. Monomer. Part of the FGAM synthase complex composed of 1 PurL, 1 PurQ and 2 PurS subunits.

It localises to the cytoplasm. It carries out the reaction N(2)-formyl-N(1)-(5-phospho-beta-D-ribosyl)glycinamide + L-glutamine + ATP + H2O = 2-formamido-N(1)-(5-O-phospho-beta-D-ribosyl)acetamidine + L-glutamate + ADP + phosphate + H(+). Its pathway is purine metabolism; IMP biosynthesis via de novo pathway; 5-amino-1-(5-phospho-D-ribosyl)imidazole from N(2)-formyl-N(1)-(5-phospho-D-ribosyl)glycinamide: step 1/2. In terms of biological role, part of the phosphoribosylformylglycinamidine synthase complex involved in the purines biosynthetic pathway. Catalyzes the ATP-dependent conversion of formylglycinamide ribonucleotide (FGAR) and glutamine to yield formylglycinamidine ribonucleotide (FGAM) and glutamate. The FGAM synthase complex is composed of three subunits. PurQ produces an ammonia molecule by converting glutamine to glutamate. PurL transfers the ammonia molecule to FGAR to form FGAM in an ATP-dependent manner. PurS interacts with PurQ and PurL and is thought to assist in the transfer of the ammonia molecule from PurQ to PurL. This Pyrobaculum neutrophilum (strain DSM 2338 / JCM 9278 / NBRC 100436 / V24Sta) (Thermoproteus neutrophilus) protein is Phosphoribosylformylglycinamidine synthase subunit PurL.